A 238-amino-acid polypeptide reads, in one-letter code: Uridylate kinase (238 aa).

12–15 contacts ATP; that stretch reads KLSG. The involved in allosteric activation by GTP stretch occupies residues 20-25; that stretch reads GEKGFG. Gly54 serves as a coordination point for UMP. ATP contacts are provided by Gly55 and Arg59. UMP-binding positions include Asp74 and 135-142; that span reads TGSPYFST. Residues Asn163, Tyr169, and Asp172 each coordinate ATP.

Belongs to the UMP kinase family. In terms of assembly, homohexamer.

It is found in the cytoplasm. It catalyses the reaction UMP + ATP = UDP + ADP. It functions in the pathway pyrimidine metabolism; CTP biosynthesis via de novo pathway; UDP from UMP (UMPK route): step 1/1. With respect to regulation, allosterically activated by GTP. Inhibited by UTP. Catalyzes the reversible phosphorylation of UMP to UDP. The protein is Uridylate kinase of Lactococcus lactis subsp. lactis (strain IL1403) (Streptococcus lactis).